A 298-amino-acid polypeptide reads, in one-letter code: Probable tRNA(His) guanylyltransferase (298 aa).

Mg(2+) contacts are provided by Asp-58, Gly-59, and Asp-105. GTP contacts are provided by residues 58-63 (DGRNFH) and 104-105 (SD).

This sequence belongs to the tRNA(His) guanylyltransferase family. In terms of assembly, homotetramer. Interacts with MFN1 and MFN2; functions as a guanyl-nucleotide exchange factor/GEF for MFN2 and also probably MFN1. Mg(2+) serves as cofactor.

Its subcellular location is the cytoplasm. The protein localises to the mitochondrion. It carries out the reaction a 5'-end ribonucleotide-tRNA(His) + GTP + ATP + H2O = a 5'-end phospho-guanosine-ribonucleotide-tRNA(His) + AMP + 2 diphosphate + H(+). In terms of biological role, adds a GMP to the 5'-end of tRNA(His) after transcription and RNase P cleavage. This step is essential for proper recognition of the tRNA and for the fidelity of protein synthesis. Also functions as a guanyl-nucleotide exchange factor/GEF for the MFN1 and MFN2 mitofusins thereby regulating mitochondrial fusion. By regulating both mitochondrial dynamics and bioenergetic function, it contributes to cell survival following oxidative stress. This is Probable tRNA(His) guanylyltransferase (Thg1l) from Mus musculus (Mouse).